The chain runs to 149 residues: Nucleoside diphosphate kinase 1 (149 aa).

ATP contacts are provided by Lys9, Phe57, Arg85, Thr91, Arg102, and Asn112. His115 functions as the Pros-phosphohistidine intermediate in the catalytic mechanism.

The protein belongs to the NDK family. As to quaternary structure, homohexamer. Mg(2+) serves as cofactor.

The catalysed reaction is a 2'-deoxyribonucleoside 5'-diphosphate + ATP = a 2'-deoxyribonucleoside 5'-triphosphate + ADP. It catalyses the reaction a ribonucleoside 5'-diphosphate + ATP = a ribonucleoside 5'-triphosphate + ADP. Its function is as follows. Major role in the synthesis of nucleoside triphosphates other than ATP. The ATP gamma phosphate is transferred to the NDP beta phosphate via a ping-pong mechanism, using a phosphorylated active-site intermediate. This NDK is microtubule-associated. The protein is Nucleoside diphosphate kinase 1 (NDKR) of Oryza sativa subsp. japonica (Rice).